The chain runs to 140 residues: MGLNPQLVVILLFFLECTRSHIHGCDKNHLREIIGILNEVTGEGTPCTEMDVPNVLTATKNTTESELVCRASKVLRIFYLKHGKTPCLKKNSSVLMELQRLFRAFRCLDSSISCTMNESKSTSLKDFLESLKSIMQMDYS.

The signal sequence occupies residues 1 to 20; sequence MGLNPQLVVILLFFLECTRS. Cystine bridges form between Cys-25–Cys-107, Cys-47–Cys-87, and Cys-69–Cys-114. 3 N-linked (GlcNAc...) asparagine glycosylation sites follow: Asn-61, Asn-91, and Asn-117.

The protein belongs to the IL-4/IL-13 family. In terms of assembly, interacts with IL4R. Interacts with IL13RA1.

It is found in the secreted. Functionally, cytokine secreted primarily by mast cells, T-cells, eosinophils, and basophils that plays a role in regulating antibody production, hematopoiesis and inflammation, and the development of effector T-cell responses. Induces the expression of class II MHC molecules on resting B-cells. Enhances both secretion and cell surface expression of IgE and IgG1. Also regulates the expression of the low affinity Fc receptor for IgE (CD23) on both lymphocytes and monocytes. Positively regulates IL31RA expression in macrophages. Stimulates autophagy in dendritic cells by interfering with mTORC1 signaling and through the induction of RUFY4. In addition, plays a critical role in higher functions of the normal brain, such as memory and learning. Upon binding to IL4, IL4R receptor dimerizes either with the common IL2R gamma chain/IL2RG to produce the type 1 signaling complex, located mainly on hematopoietic cells, or with the IL13RA1 to produce the type 2 complex, which is also expressed on nonhematopoietic cells. Engagement of both types of receptors initiates JAK3 and to a lower extend JAK1 phosphorylation leading to activation of the signal transducer and activator of transcription 6/STAT6. In Mus musculus (Mouse), this protein is Interleukin-4 (Il4).